The sequence spans 100 residues: Urease subunit gamma (100 aa).

This sequence belongs to the urease gamma subunit family. As to quaternary structure, heterotrimer of UreA (gamma), UreB (beta) and UreC (alpha) subunits. Three heterotrimers associate to form the active enzyme.

It localises to the cytoplasm. The catalysed reaction is urea + 2 H2O + H(+) = hydrogencarbonate + 2 NH4(+). It functions in the pathway nitrogen metabolism; urea degradation; CO(2) and NH(3) from urea (urease route): step 1/1. The protein is Urease subunit gamma of Pseudomonas fluorescens (strain Pf0-1).